Reading from the N-terminus, the 302-residue chain is Lysosomal thioesterase PPT2 (302 aa).

The first 27 residues, 1 to 27 (MPGLWRQRLPSAWALLLLPFLPLLLPA), serve as a signal peptide directing secretion. Asparagine 60 carries an N-linked (GlcNAc...) asparagine glycan. 2 disulfides stabilise this stretch: cysteine 109-cysteine 117 and cysteine 165-cysteine 176. Serine 111 functions as the Nucleophile in the catalytic mechanism. 2 N-linked (GlcNAc...) asparagine glycosylation sites follow: asparagine 190 and asparagine 206. Aspartate 228 is a catalytic residue. Residue asparagine 245 is glycosylated (N-linked (GlcNAc...) asparagine). A disulfide bridge connects residues cysteine 276 and cysteine 296. Residue histidine 283 is part of the active site. Asparagine 289 carries an N-linked (GlcNAc...) asparagine glycan.

This sequence belongs to the palmitoyl-protein thioesterase family.

It localises to the lysosome. The enzyme catalyses hexadecanoyl-CoA + H2O = hexadecanoate + CoA + H(+). It carries out the reaction S-hexadecanoyl-N-acetylcysteamine + H2O = N-acetylcysteamine + hexadecanoate + H(+). Functionally, catalyzes the cleavage of thioester bonds from S-palmitoyl-CoA or S-palmitoyl-N-acetylcysteamine (unbranched structures) but does not have activity against palmitoylcysteine or palmitoylated proteins, branched structures or bulky head groups. Conversely, hydrolyzes both long and short chain fatty acyl-CoA substrate. The polypeptide is Lysosomal thioesterase PPT2 (Ppt2) (Rattus norvegicus (Rat)).